The sequence spans 280 residues: Rhomboid-like protein 11, chloroplastic (280 aa).

Residues 1–57 (MSQLLHLHRLSLPQSSLRFRFPPLHRRRAASSPTNSTQPPLQFRPLTVSRSQITCRF) constitute a chloroplast transit peptide. Topologically, residues 58-82 (SQSDITPQFELDKAKDNRKPQKRAN) are stromal. Residues 83 to 103 (GIFWIILINLGIYLADHFFQV) traverse the membrane as a helical segment. Residues 104–117 (RGIKSLYLYHNFPA) lie on the Chloroplast intermembrane side of the membrane. Residues 118–140 (WYQFVTATFCHANWNHLSSNLFF) form a helical membrane-spanning segment. Topologically, residues 141 to 154 (LYIFGKLVEEEEGN) are stromal. The chain crosses the membrane as a helical span at residues 155–175 (FGLWLSYLFTGVGANLVSWLV). Over 176–178 (LPR) the chain is Chloroplast intermembrane. Residues 179 to 199 (NAVSVGASGAVFGLFAISVLV) traverse the membrane as a helical segment. Residue Ser-186 is the Nucleophile of the active site. The Stromal segment spans residues 200 to 243 (KMSWDWRKILEVLILGQFVIERVMEAAQASAGLSGTIYGGYSLQ). Residues 244–264 (TVNHIAHLSGALVGVVLVWLL) traverse the membrane as a helical segment. Catalysis depends on His-250, which acts as the Charge relay system. Topologically, residues 265–280 (SKFPSASMDQDVKKSS) are chloroplast intermembrane.

The protein belongs to the peptidase S54 family. As to quaternary structure, homooligomer.

It is found in the plastid. The protein resides in the chloroplast inner membrane. Its function is as follows. Rhomboid-type serine protease that catalyzes intramembrane proteolysis. May be involved in TIC22 processing during its import. The protein is Rhomboid-like protein 11, chloroplastic of Arabidopsis thaliana (Mouse-ear cress).